A 302-amino-acid polypeptide reads, in one-letter code: Deoxyribonuclease-1-like 1 (302 aa).

The first 18 residues, Met-1–Ala-18, serve as a signal peptide directing secretion. Residues Glu-97 and His-148 contribute to the active site. A disulfide bond links Cys-187 and Cys-224. N-linked (GlcNAc...) asparagine glycosylation is present at Asn-261.

It belongs to the DNase I family. As to expression, highest levels in skeletal and cardiac muscles. Detectable in all other tissues tested except brain.

The protein resides in the endoplasmic reticulum. In Homo sapiens (Human), this protein is Deoxyribonuclease-1-like 1 (DNASE1L1).